Consider the following 158-residue polypeptide: Crossover junction endodeoxyribonuclease RuvC (158 aa).

Catalysis depends on residues Asp-7, Glu-66, and Asp-139. Positions 7, 66, and 139 each coordinate Mg(2+).

Belongs to the RuvC family. In terms of assembly, homodimer which binds Holliday junction (HJ) DNA. The HJ becomes 2-fold symmetrical on binding to RuvC with unstacked arms; it has a different conformation from HJ DNA in complex with RuvA. In the full resolvosome a probable DNA-RuvA(4)-RuvB(12)-RuvC(2) complex forms which resolves the HJ. Mg(2+) serves as cofactor.

It localises to the cytoplasm. The enzyme catalyses Endonucleolytic cleavage at a junction such as a reciprocal single-stranded crossover between two homologous DNA duplexes (Holliday junction).. Its function is as follows. The RuvA-RuvB-RuvC complex processes Holliday junction (HJ) DNA during genetic recombination and DNA repair. Endonuclease that resolves HJ intermediates. Cleaves cruciform DNA by making single-stranded nicks across the HJ at symmetrical positions within the homologous arms, yielding a 5'-phosphate and a 3'-hydroxyl group; requires a central core of homology in the junction. The consensus cleavage sequence is 5'-(A/T)TT(C/G)-3'. Cleavage occurs on the 3'-side of the TT dinucleotide at the point of strand exchange. HJ branch migration catalyzed by RuvA-RuvB allows RuvC to scan DNA until it finds its consensus sequence, where it cleaves and resolves the cruciform DNA. The protein is Crossover junction endodeoxyribonuclease RuvC of Carboxydothermus hydrogenoformans (strain ATCC BAA-161 / DSM 6008 / Z-2901).